The following is a 615-amino-acid chain: DNA mismatch repair protein MutL (615 aa).

Residues 363 to 397 (FAEPAAREPVAPRYTPAPASGSRPAAPWPNAQPGY) are disordered. The segment covering 364–391 (AEPAAREPVAPRYTPAPASGSRPAAPWP) has biased composition (low complexity).

This sequence belongs to the DNA mismatch repair MutL/HexB family.

Functionally, this protein is involved in the repair of mismatches in DNA. It is required for dam-dependent methyl-directed DNA mismatch repair. May act as a 'molecular matchmaker', a protein that promotes the formation of a stable complex between two or more DNA-binding proteins in an ATP-dependent manner without itself being part of a final effector complex. This Escherichia coli (strain ATCC 8739 / DSM 1576 / NBRC 3972 / NCIMB 8545 / WDCM 00012 / Crooks) protein is DNA mismatch repair protein MutL.